A 131-amino-acid polypeptide reads, in one-letter code: Small ribosomal subunit protein uS8 (131 aa).

It belongs to the universal ribosomal protein uS8 family. Part of the 30S ribosomal subunit. Contacts proteins S5 and S12.

One of the primary rRNA binding proteins, it binds directly to 16S rRNA central domain where it helps coordinate assembly of the platform of the 30S subunit. This chain is Small ribosomal subunit protein uS8, found in Mycoplasmopsis agalactiae (strain NCTC 10123 / CIP 59.7 / PG2) (Mycoplasma agalactiae).